The chain runs to 540 residues: GMP synthase [glutamine-hydrolyzing] (540 aa).

One can recognise a Glutamine amidotransferase type-1 domain in the interval 24 to 217 (KILIVDFGSQ…VRKVAGLTGD (194 aa)). C101 acts as the Nucleophile in catalysis. Catalysis depends on residues H191 and E193. Positions 218–415 (WTMRAFREEA…LGLPEIFVGR (198 aa)) constitute a GMPS ATP-PPase domain. 245 to 251 (SGGVDSS) contributes to the ATP binding site.

Homodimer.

The enzyme catalyses XMP + L-glutamine + ATP + H2O = GMP + L-glutamate + AMP + diphosphate + 2 H(+). The protein operates within purine metabolism; GMP biosynthesis; GMP from XMP (L-Gln route): step 1/1. Functionally, catalyzes the synthesis of GMP from XMP. The protein is GMP synthase [glutamine-hydrolyzing] of Nitrobacter hamburgensis (strain DSM 10229 / NCIMB 13809 / X14).